We begin with the raw amino-acid sequence, 96 residues long: Acylphosphatase (96 aa).

Residues 4 to 91 (RVHVYVKGKV…GEFDDFRILY (88 aa)) enclose the Acylphosphatase-like domain. Catalysis depends on residues arginine 19 and asparagine 37.

The protein belongs to the acylphosphatase family.

The catalysed reaction is an acyl phosphate + H2O = a carboxylate + phosphate + H(+). This Syntrophus aciditrophicus (strain SB) protein is Acylphosphatase (acyP).